A 199-amino-acid polypeptide reads, in one-letter code: Inner membrane protein E199L (199 aa).

The chain crosses the membrane as a helical span at residues 150–170; it reads INVMNHPFLTLILIILILIII.

Belongs to the asfivirus E199L family. In terms of assembly, interacts with host PYCR2; this interaction results in autophagy activation. In terms of processing, contains intramolecular disulfide bonds.

It localises to the virion membrane. Its subcellular location is the host membrane. In terms of biological role, essential for viral fusion with host endosomal membrane and core release. Not required for virus morphogenesis and egress. Induces complete autophagy through the interaction with and down-regulation of host PYCR2. The polypeptide is Inner membrane protein E199L (Ornithodoros (relapsing fever ticks)).